A 448-amino-acid polypeptide reads, in one-letter code: Serine--tRNA ligase (448 aa).

246 to 248 is a binding site for L-serine; it reads TAE. Residues 277–279 and Val-293 each bind ATP; that span reads RKE. Position 300 (Glu-300) interacts with L-serine. Residue 364 to 367 participates in ATP binding; sequence ELAS. L-serine is bound at residue Thr-399.

This sequence belongs to the class-II aminoacyl-tRNA synthetase family. Type-1 seryl-tRNA synthetase subfamily. Homodimer. The tRNA molecule binds across the dimer.

Its subcellular location is the cytoplasm. The catalysed reaction is tRNA(Ser) + L-serine + ATP = L-seryl-tRNA(Ser) + AMP + diphosphate + H(+). The enzyme catalyses tRNA(Sec) + L-serine + ATP = L-seryl-tRNA(Sec) + AMP + diphosphate + H(+). Its pathway is aminoacyl-tRNA biosynthesis; selenocysteinyl-tRNA(Sec) biosynthesis; L-seryl-tRNA(Sec) from L-serine and tRNA(Sec): step 1/1. Functionally, catalyzes the attachment of serine to tRNA(Ser). Is also able to aminoacylate tRNA(Sec) with serine, to form the misacylated tRNA L-seryl-tRNA(Sec), which will be further converted into selenocysteinyl-tRNA(Sec). The sequence is that of Serine--tRNA ligase from Pyrobaculum islandicum (strain DSM 4184 / JCM 9189 / GEO3).